Here is a 111-residue protein sequence, read N- to C-terminus: Ig kappa chain V-III region PC 2880/PC 1229 (111 aa).

Residues 1-23 (DIVLTQSPASLAVSLGQRATISC) form a framework-1 region. Cysteine 23 and cysteine 92 are disulfide-bonded. Residues 24–38 (RASESVDNYGISFMN) form a complementarity-determining-1 region. The tract at residues 39 to 53 (WFQQKPGQPPKLLIY) is framework-2. A complementarity-determining-2 region spans residues 54 to 60 (AASNQGS). Residues 61-92 (GVPARFSGSGSGTDFSLNIHPMEEDDTAMYFC) form a framework-3 region. A complementarity-determining-3 region spans residues 93–101 (QQSKEVPWT). The framework-4 stretch occupies residues 102 to 111 (FGGGTKLEIK).

This is Ig kappa chain V-III region PC 2880/PC 1229 from Mus musculus (Mouse).